Here is a 353-residue protein sequence, read N- to C-terminus: Dimethylsulfoniopropionate lyase 2 (353 aa).

Catalysis depends on proton donor/acceptor residues cysteine 125 and cysteine 274. The disordered stretch occupies residues 326-353 (DPNETDVSKGRPTKAEHRFGPEFEEMLQ). The segment covering 331 to 346 (DVSKGRPTKAEHRFGP) has biased composition (basic and acidic residues).

The protein belongs to the aspartate/glutamate racemases family. ALMA1 subfamily. Homotetramer.

The enzyme catalyses S,S-dimethyl-beta-propiothetin = acrylate + dimethyl sulfide + H(+). Mediates cleavage of dimethylsulfoniopropionate (DMSP) into dimethyl sulfide (DMS) and acrylate. DMS is the principal form by which sulfur is transported from oceans to the atmosphere and is a key component of the ocean sulfur cycle. The polypeptide is Dimethylsulfoniopropionate lyase 2 (Emiliania huxleyi (strain CCMP1516)).